The sequence spans 156 residues: Small ribosomal subunit protein uS7 (156 aa).

The protein belongs to the universal ribosomal protein uS7 family. In terms of assembly, part of the 30S ribosomal subunit. Contacts proteins S9 and S11.

In terms of biological role, one of the primary rRNA binding proteins, it binds directly to 16S rRNA where it nucleates assembly of the head domain of the 30S subunit. Is located at the subunit interface close to the decoding center, probably blocks exit of the E-site tRNA. The sequence is that of Small ribosomal subunit protein uS7 from Geotalea uraniireducens (strain Rf4) (Geobacter uraniireducens).